We begin with the raw amino-acid sequence, 271 residues long: L-aspartate dehydrogenase (271 aa).

Residues A124 and N192 each contribute to the NAD(+) site. H222 is a catalytic residue.

This sequence belongs to the L-aspartate dehydrogenase family.

The enzyme catalyses L-aspartate + NADP(+) + H2O = oxaloacetate + NH4(+) + NADPH + H(+). The catalysed reaction is L-aspartate + NAD(+) + H2O = oxaloacetate + NH4(+) + NADH + H(+). The protein operates within cofactor biosynthesis; NAD(+) biosynthesis; iminoaspartate from L-aspartate (dehydrogenase route): step 1/1. In terms of biological role, specifically catalyzes the NAD or NADP-dependent dehydrogenation of L-aspartate to iminoaspartate. The protein is L-aspartate dehydrogenase of Methanosarcina mazei (strain ATCC BAA-159 / DSM 3647 / Goe1 / Go1 / JCM 11833 / OCM 88) (Methanosarcina frisia).